We begin with the raw amino-acid sequence, 380 residues long: uncharacterized protein (380 aa).

Positions 256–301 form a coiled coil; sequence DKEEKIQKSYQYQTELITELQGRIAELEKENQSLKENVKEPETSKP.

This is an uncharacterized protein from Pasteurella multocida (strain Pm70).